A 236-amino-acid chain; its full sequence is Uridylate kinase (236 aa).

Position 10-13 (10-13) interacts with ATP; it reads KLSG. UMP is bound at residue G52. G53 and R57 together coordinate ATP. UMP is bound by residues D72 and 133–140; that span reads TGNPFFTT. Positions 160, 166, and 169 each coordinate ATP.

Belongs to the UMP kinase family. As to quaternary structure, homohexamer.

It localises to the cytoplasm. It catalyses the reaction UMP + ATP = UDP + ADP. It participates in pyrimidine metabolism; CTP biosynthesis via de novo pathway; UDP from UMP (UMPK route): step 1/1. With respect to regulation, inhibited by UTP. Catalyzes the reversible phosphorylation of UMP to UDP. The protein is Uridylate kinase of Polaromonas sp. (strain JS666 / ATCC BAA-500).